The following is a 684-amino-acid chain: Fermitin family homolog 2 (684 aa).

Residues 40–81 form an interaction with membranes containing phosphatidylinositol phosphate region; sequence HIGGVMLKLVEKLDVKKDWSDHALWWEKKKTWLLKTHWTLDK. The segment at 141–163 is disordered; the sequence is LRKPRDPKKKKKKLEDAEEETLE. Residues 279-577 enclose the FERM domain; that stretch reads DLNPKYDAIR…SLPEFGITHF (299 aa). One can recognise a PH domain in the interval 378 to 474; the sequence is KVFKPKKLTL…WMAACRLASK (97 aa). K381 contributes to the a 1,2-diacyl-sn-glycero-3-phospho-(1D-myo-inositol-3,4,5-trisphosphate) binding site.

Belongs to the kindlin family.

Its subcellular location is the cytoplasm. It localises to the cell cortex. It is found in the cytoskeleton. The protein localises to the stress fiber. The protein resides in the cell junction. Its subcellular location is the focal adhesion. It localises to the membrane. It is found in the cell projection. The protein localises to the lamellipodium membrane. The protein resides in the nucleus. Its subcellular location is the myofibril. It localises to the sarcomere. It is found in the i band. The protein localises to the cell surface. Its function is as follows. Scaffolding protein that enhances integrin activation mediated by TLN1 and/or TLN2, but activates integrins only weakly by itself. Binds to membranes enriched in phosphoinositides. Enhances integrin-mediated cell adhesion onto the extracellular matrix and cell spreading; this requires both its ability to interact with integrins and with phospholipid membranes. Required for the assembly of focal adhesions. Participates in the connection between extracellular matrix adhesion sites and the actin cytoskeleton and also in the orchestration of actin assembly and cell shape modulation. Plays a role in the TGFB1 and integrin signaling pathways. Stabilizes active CTNNB1 and plays a role in the regulation of transcription mediated by CTNNB1 and TCF7L2/TCF4 and in Wnt signaling. Required for normal embryonic development, including normal heart morphogenesis and normal angiogenesis. The sequence is that of Fermitin family homolog 2 (fermt2) from Danio rerio (Zebrafish).